The following is a 122-amino-acid chain: Large ribosomal subunit protein uL14 (122 aa).

The protein belongs to the universal ribosomal protein uL14 family. As to quaternary structure, part of the 50S ribosomal subunit. Forms a cluster with proteins L3 and L19. In the 70S ribosome, L14 and L19 interact and together make contacts with the 16S rRNA in bridges B5 and B8.

Binds to 23S rRNA. Forms part of two intersubunit bridges in the 70S ribosome. This chain is Large ribosomal subunit protein uL14, found in Mycoplasmopsis pulmonis (strain UAB CTIP) (Mycoplasma pulmonis).